A 136-amino-acid polypeptide reads, in one-letter code: Large ribosomal subunit protein bL21 (136 aa).

The protein belongs to the bacterial ribosomal protein bL21 family. Part of the 50S ribosomal subunit. Contacts protein L20.

Functionally, this protein binds to 23S rRNA in the presence of protein L20. The protein is Large ribosomal subunit protein bL21 of Gloeothece citriformis (strain PCC 7424) (Cyanothece sp. (strain PCC 7424)).